The chain runs to 217 residues: RIRARYPIIAAHLAPGSESRFDFQKYVNRSLEDDFKVVVGISPILWFFAVLFLLSNTHGWVAYLWLPFIPLIIILVVGTKLQVIITQLGLSIQDRGDVVKGAPVVQPGDDLFWFGRPRLVLFLIHFCLFQNAFQLAFFIWSVYEFGIKTCFHEKTEDIVRASGLVPNRDTSATQTTELSKGKLMMADTCLPTEDLVGMVVTAAHSGKRFFVDSIRYD.

A run of 3 helical transmembrane segments spans residues F35–S55, G59–T79, and L119–I139.

It belongs to the MLO family.

The protein localises to the membrane. Its function is as follows. May be involved in modulation of pathogen defense and leaf cell death. The sequence is that of MLO-like protein from Linum usitatissimum (Flax).